We begin with the raw amino-acid sequence, 366 residues long: Histidinol-phosphate aminotransferase (366 aa).

Position 228 is an N6-(pyridoxal phosphate)lysine (K228).

Belongs to the class-II pyridoxal-phosphate-dependent aminotransferase family. Histidinol-phosphate aminotransferase subfamily. Homodimer. Pyridoxal 5'-phosphate serves as cofactor.

It catalyses the reaction L-histidinol phosphate + 2-oxoglutarate = 3-(imidazol-4-yl)-2-oxopropyl phosphate + L-glutamate. Its pathway is amino-acid biosynthesis; L-histidine biosynthesis; L-histidine from 5-phospho-alpha-D-ribose 1-diphosphate: step 7/9. The sequence is that of Histidinol-phosphate aminotransferase from Corynebacterium glutamicum (strain R).